Consider the following 316-residue polypeptide: MQSSGETDILATIGTRGSALALAQANEVRDRLARAHQVAPERIVIKTIRTSGDAIQDRPLFDVGGKGLFTKEIEEALLAGSIDFAVHSSKDVPTFLPDATWLPAFLPREDVRDAFISPRAASLNDLPAGSIVGTASLRRQAMVLRLRPDLKVSVIRGNVETRLRKLVAGEADATLLALAGLNRLGLQDRATRILETDEFLPAVGQGAIAIESRRDDDRINAFVKAIGDSETEVALSAERSFLALLDGSCRTPIGGHCRVNGDRIHFRGLIISPDGTQSYETTREGARADAAALGADAARELRERAGEKFFTLFAGA.

Cysteine 249 carries the S-(dipyrrolylmethanemethyl)cysteine modification.

The protein belongs to the HMBS family. Monomer. Dipyrromethane serves as cofactor.

The catalysed reaction is 4 porphobilinogen + H2O = hydroxymethylbilane + 4 NH4(+). It participates in porphyrin-containing compound metabolism; protoporphyrin-IX biosynthesis; coproporphyrinogen-III from 5-aminolevulinate: step 2/4. In terms of biological role, tetrapolymerization of the monopyrrole PBG into the hydroxymethylbilane pre-uroporphyrinogen in several discrete steps. The protein is Porphobilinogen deaminase of Nitrobacter hamburgensis (strain DSM 10229 / NCIMB 13809 / X14).